The following is a 182-amino-acid chain: Ribulose bisphosphate carboxylase small subunit, chloroplastic 6 (182 aa).

The N-terminal 41 residues, 1 to 41 (MAATMMSKTIISSKQCSKPIAPPKVSINKGFVNTSAAIKNR), are a transit peptide targeting the chloroplast.

Belongs to the RuBisCO small chain family. As to quaternary structure, heterohexadecamer of 8 large and 8 small subunits.

Its subcellular location is the plastid. It localises to the chloroplast. Its function is as follows. RuBisCO catalyzes two reactions: the carboxylation of D-ribulose 1,5-bisphosphate, the primary event in carbon dioxide fixation, as well as the oxidative fragmentation of the pentose substrate. Both reactions occur simultaneously and in competition at the same active site. Although the small subunit is not catalytic it is essential for maximal activity. The sequence is that of Ribulose bisphosphate carboxylase small subunit, chloroplastic 6 from Acetabularia peniculus (Green alga).